The chain runs to 529 residues: Bifunctional purine biosynthesis protein PurH (529 aa).

In terms of domain architecture, MGS-like spans 8–158 (PSAPDLVAPK…KNHGYVAVCT (151 aa)).

Belongs to the PurH family.

The enzyme catalyses (6R)-10-formyltetrahydrofolate + 5-amino-1-(5-phospho-beta-D-ribosyl)imidazole-4-carboxamide = 5-formamido-1-(5-phospho-D-ribosyl)imidazole-4-carboxamide + (6S)-5,6,7,8-tetrahydrofolate. It catalyses the reaction IMP + H2O = 5-formamido-1-(5-phospho-D-ribosyl)imidazole-4-carboxamide. It functions in the pathway purine metabolism; IMP biosynthesis via de novo pathway; 5-formamido-1-(5-phospho-D-ribosyl)imidazole-4-carboxamide from 5-amino-1-(5-phospho-D-ribosyl)imidazole-4-carboxamide (10-formyl THF route): step 1/1. The protein operates within purine metabolism; IMP biosynthesis via de novo pathway; IMP from 5-formamido-1-(5-phospho-D-ribosyl)imidazole-4-carboxamide: step 1/1. The polypeptide is Bifunctional purine biosynthesis protein PurH (Caulobacter vibrioides (strain ATCC 19089 / CIP 103742 / CB 15) (Caulobacter crescentus)).